Consider the following 63-residue polypeptide: SPbeta prophage-derived uncharacterized protein YotC (63 aa).

In Bacillus subtilis (strain 168), this protein is SPbeta prophage-derived uncharacterized protein YotC (yotC).